The sequence spans 353 residues: tRNA-specific 2-thiouridylase MnmA 2 (353 aa).

Leu6 to Ser13 is an ATP binding site. Positions Asn92 to Asp94 are interaction with target base in tRNA. Residue Cys97 is the Nucleophile of the active site. A disulfide bridge connects residues Cys97 and Cys192. Position 120 (Gly120) interacts with ATP. Positions Lys142 to Gln144 are interaction with tRNA. Cys192 serves as the catalytic Cysteine persulfide intermediate.

It belongs to the MnmA/TRMU family.

Its subcellular location is the cytoplasm. It carries out the reaction S-sulfanyl-L-cysteinyl-[protein] + uridine(34) in tRNA + AH2 + ATP = 2-thiouridine(34) in tRNA + L-cysteinyl-[protein] + A + AMP + diphosphate + H(+). Its function is as follows. Catalyzes the 2-thiolation of uridine at the wobble position (U34) of tRNA, leading to the formation of s(2)U34. This chain is tRNA-specific 2-thiouridylase MnmA 2, found in Bacteroides fragilis (strain YCH46).